Here is a 430-residue protein sequence, read N- to C-terminus: Histidine--tRNA ligase (430 aa).

This sequence belongs to the class-II aminoacyl-tRNA synthetase family. Homodimer.

The protein localises to the cytoplasm. It catalyses the reaction tRNA(His) + L-histidine + ATP = L-histidyl-tRNA(His) + AMP + diphosphate + H(+). This is Histidine--tRNA ligase from Anaplasma marginale (strain St. Maries).